The following is a 627-amino-acid chain: E3 ubiquitin-protein ligase DTX1 (627 aa).

WWE domains follow at residues 14–94 (GLGF…PVRR) and 95–171 (NFYD…RLRR). Disordered stretches follow at residues 222 to 254 (QRRK…ALVV), 269 to 327 (PATG…ALPV), and 368 to 398 (PPVS…KSKN). Pro residues-rich tracts occupy residues 230-248 (PAAP…PGGP) and 275-287 (EPAP…PRSP). The SH3-binding motif lies at 240–243 (PPPL). The span at 296–314 (PGQNNLSRPGPQRSTSVSA) shows a compositional bias: polar residues. A compositionally biased stretch (basic residues) spans 386-396 (RKTKKKHLKKS). Residues 418-479 (CTICMERLVT…DGSLQCPTCK (62 aa)) form an RING-type zinc finger.

It belongs to the Deltex family. Homodimer. May form a heterodimer with other members of the Deltex family. Interacts with NOTCH1 via its N-terminal region and EIF3F, the interaction is required for NOTCH1 deubiquitination. Interacts with EP300. Forms a heterodimer with BBAP; the heterodimerization leading to an increase of in vitro ubiquitin ligase activity. Interacts with ITCH. Ubiquitinated; undergoes 'Lys-29'-linked polyubiquitination catalyzed by ITCH. Predominantly expressed in the brain and testis. Weakly expressed in the thymus, spleen and ovary. Predominantly expressed in regions containing post-mitotic differentiating neurons.

The protein localises to the cytoplasm. The protein resides in the nucleus. It catalyses the reaction S-ubiquitinyl-[E2 ubiquitin-conjugating enzyme]-L-cysteine + [acceptor protein]-L-lysine = [E2 ubiquitin-conjugating enzyme]-L-cysteine + N(6)-ubiquitinyl-[acceptor protein]-L-lysine.. It functions in the pathway protein modification; protein ubiquitination. In terms of biological role, regulator of Notch signaling, a signaling pathway involved in cell-cell communications that regulates a broad spectrum of cell-fate determinations. Mainly acts as a positive regulator of Notch, but it also acts as a negative regulator, depending on the developmental and cell context. Mediates the antineural activity of Notch, possibly by inhibiting the transcriptional activation mediated by MATCH1. Involved in neurogenesis, lymphogenesis and myogenesis, and may also be involved in MZB (Marginal zone B) cell differentiation. Promotes B-cell development at the expense of T-cell development, suggesting that it can antagonize NOTCH1. Functions as an ubiquitin ligase protein in vivo, mediating ubiquitination and promoting degradation of MEKK1, suggesting that it may regulate the Notch pathway via some ubiquitin ligase activity. The protein is E3 ubiquitin-protein ligase DTX1 (Dtx1) of Mus musculus (Mouse).